Here is a 97-residue protein sequence, read N- to C-terminus: Putative pterin-4-alpha-carbinolamine dehydratase (97 aa).

The protein belongs to the pterin-4-alpha-carbinolamine dehydratase family.

It catalyses the reaction (4aS,6R)-4a-hydroxy-L-erythro-5,6,7,8-tetrahydrobiopterin = (6R)-L-erythro-6,7-dihydrobiopterin + H2O. The sequence is that of Putative pterin-4-alpha-carbinolamine dehydratase from Cyanothece sp. (strain PCC 7425 / ATCC 29141).